The sequence spans 555 residues: Formate--tetrahydrofolate ligase (555 aa).

65–72 (TPAGEGKS) is a binding site for ATP.

It belongs to the formate--tetrahydrofolate ligase family.

The catalysed reaction is (6S)-5,6,7,8-tetrahydrofolate + formate + ATP = (6R)-10-formyltetrahydrofolate + ADP + phosphate. Its pathway is one-carbon metabolism; tetrahydrofolate interconversion. The chain is Formate--tetrahydrofolate ligase from Staphylococcus epidermidis (strain ATCC 35984 / DSM 28319 / BCRC 17069 / CCUG 31568 / BM 3577 / RP62A).